Reading from the N-terminus, the 397-residue chain is Phosphoglycerate kinase (397 aa).

Residues 21 to 23, Arg37, 60 to 63, Arg119, and Arg152 contribute to the substrate site; these read DFN and HLGR. Residues Lys202, Gly294, Glu325, and 351-354 each bind ATP; that span reads GGDS.

It belongs to the phosphoglycerate kinase family. Monomer.

It is found in the cytoplasm. The enzyme catalyses (2R)-3-phosphoglycerate + ATP = (2R)-3-phospho-glyceroyl phosphate + ADP. It functions in the pathway carbohydrate degradation; glycolysis; pyruvate from D-glyceraldehyde 3-phosphate: step 2/5. The sequence is that of Phosphoglycerate kinase from Pseudothermotoga lettingae (strain ATCC BAA-301 / DSM 14385 / NBRC 107922 / TMO) (Thermotoga lettingae).